Reading from the N-terminus, the 542-residue chain is Propane 2-monooxygenase, hydroxylase component large subunit (542 aa).

Fe cation-binding residues include Glu97, Glu127, His130, Glu192, Glu226, and His229.

It belongs to the TmoA/XamoA family. In terms of assembly, the propane 2-monooxygenase multicomponent enzyme system is composed of an electron transfer component and a monooxygenase component interacting with the effector protein MimD. The electron transfer component is composed of a reductase (MimB), and the monooxygenase component is formed by a large subunit (MimA) and a small subunit (MimC). Requires the presence of the chaperonin-like protein MimG to ensure a productive folding, resulting of a soluble MimA, which leads to the active form of MimABCD. Fe(2+) serves as cofactor.

The catalysed reaction is propane + NADH + O2 + H(+) = propan-2-ol + NAD(+) + H2O. The enzyme catalyses acetone + NADH + O2 + H(+) = hydroxyacetone + NAD(+) + H2O. It catalyses the reaction butan-2-one + NADH + O2 + H(+) = 1-hydroxy-2-butanone + NAD(+) + H2O. It carries out the reaction phenol + NADH + O2 + H(+) = hydroquinone + NAD(+) + H2O. Component of the propane 2-monooxygenase multicomponent enzyme system which is involved in the degradation of propane via the O2-dependent hydroxylation of propane. Also involved in the degradation of acetone via the O2-dependent hydroxylation of acetone. Also able to catalyze the oxidation of phenol, methylethylketone (2-butanone), 1-propanol and 2-propanol. The polypeptide is Propane 2-monooxygenase, hydroxylase component large subunit (Mycolicibacterium smegmatis (strain ATCC 700084 / mc(2)155) (Mycobacterium smegmatis)).